Consider the following 445-residue polypeptide: Ribosomal protein uS12 methylthiotransferase RimO (445 aa).

One can recognise an MTTase N-terminal domain in the interval 4–119; it reads LKFGLVSLGC…LDDAIEDFFN (116 aa). 6 residues coordinate [4Fe-4S] cluster: C13, C48, C82, C156, C160, and C163. Residues 142–372 form the Radical SAM core domain; that stretch reads TTGEYSSYVR…MLIQQQVSKN (231 aa). The region spanning 375-441 is the TRAM domain; the sequence is AKKIGKVYKV…EYDLIGVVYN (67 aa).

The protein belongs to the methylthiotransferase family. RimO subfamily. [4Fe-4S] cluster is required as a cofactor.

The protein localises to the cytoplasm. The catalysed reaction is L-aspartate(89)-[ribosomal protein uS12]-hydrogen + (sulfur carrier)-SH + AH2 + 2 S-adenosyl-L-methionine = 3-methylsulfanyl-L-aspartate(89)-[ribosomal protein uS12]-hydrogen + (sulfur carrier)-H + 5'-deoxyadenosine + L-methionine + A + S-adenosyl-L-homocysteine + 2 H(+). Catalyzes the methylthiolation of an aspartic acid residue of ribosomal protein uS12. This Clostridium acetobutylicum (strain ATCC 824 / DSM 792 / JCM 1419 / IAM 19013 / LMG 5710 / NBRC 13948 / NRRL B-527 / VKM B-1787 / 2291 / W) protein is Ribosomal protein uS12 methylthiotransferase RimO.